The sequence spans 211 residues: Thymidylate kinase (211 aa).

11–18 provides a ligand contact to ATP; that stretch reads GPDGAGKT.

The protein belongs to the thymidylate kinase family.

It carries out the reaction dTMP + ATP = dTDP + ADP. Functionally, phosphorylation of dTMP to form dTDP in both de novo and salvage pathways of dTTP synthesis. In Streptococcus equi subsp. zooepidemicus (strain H70), this protein is Thymidylate kinase.